We begin with the raw amino-acid sequence, 1377 residues long: DNA-directed RNA polymerase subunit beta' (1377 aa).

Positions 60, 62, 75, and 78 each coordinate Zn(2+). Asp449, Asp451, and Asp453 together coordinate Mg(2+). Zn(2+) is bound by residues Cys777, Cys851, Cys858, and Cys861.

The protein belongs to the RNA polymerase beta' chain family. The RNAP catalytic core consists of 2 alpha, 1 beta, 1 beta' and 1 omega subunit. When a sigma factor is associated with the core the holoenzyme is formed, which can initiate transcription. Mg(2+) is required as a cofactor. Requires Zn(2+) as cofactor.

The enzyme catalyses RNA(n) + a ribonucleoside 5'-triphosphate = RNA(n+1) + diphosphate. In terms of biological role, DNA-dependent RNA polymerase catalyzes the transcription of DNA into RNA using the four ribonucleoside triphosphates as substrates. This chain is DNA-directed RNA polymerase subunit beta', found in Borrelia recurrentis (strain A1).